The primary structure comprises 361 residues: Probable cytosolic iron-sulfur protein assembly protein 1 (361 aa).

WD repeat units lie at residues 10–49 (AHSD…NFPQ), 56–105 (THKR…TEIL), 120–160 (GHEN…EEFE), 167–206 (DHQH…DDWS), 213–265 (GHEG…SIKH), 280–319 (VHQY…SWSI), and 327–361 (HGVH…IWKP).

It belongs to the WD repeat CIA1 family. In terms of assembly, interacts with NAR1.

Its subcellular location is the cytoplasm. The protein localises to the nucleus. In terms of biological role, essential component of the cytosolic iron-sulfur (Fe/S) protein assembly machinery. Required for the maturation of extramitochondrial Fe/S proteins. The protein is Probable cytosolic iron-sulfur protein assembly protein 1 of Scheffersomyces stipitis (strain ATCC 58785 / CBS 6054 / NBRC 10063 / NRRL Y-11545) (Yeast).